The following is a 1044-amino-acid chain: MSDSQQSIKVLEELFQKLSVATADNRHEIASEVASFLNGNIIEHDVPEHFFGELAKGIKDKKTAANAMQAVAHIANQSNLSPSVEPYIVQLVPAICTNAGNKDKEIQSVASETLISIVNAVNPVAIKALLPHLTNAIVETNKWQEKIAILAAISAMVDAAKDQVALRMPELIPVLSETMWDTKKEVKAAATAAMTKATETVDNKDIERFIPSLIQCIADPTEVPETVHLLGATTFVAEVTPATLSIMVPLLSRGLNERETGIKRKSAVIIDNMCKLVEDPQVIAPFLGKLLPGLKSNFATIADPEAREVTLRALKTLRRVGNVGEDDAIPEVSHAGDVSTTLQVVNELLKDETVAPRFKIVVEYIAAIGADLIDERIIDQQAWFTHITPYMTIFLHEKKAKDILDEFRKRAVDNIPVGPNFDDEEDEGEDLCNCEFSLAYGAKILLNKTQLRLKRARRYGICGPNGCGKSTLMRAIANGQVDGFPTQEECRTVYVEHDIDGTHSDTSVLDFVFESGVGTKEAIKDKLIEFGFTDEMIAMPISALSGGWKMKLALARAVLRNADILLLDEPTNHLDTVNVAWLVNYLNTCGITSITISHDSVFLDNVCEYIINYEGLKLRKYKGNFTEFVKKCPAAKAYEELSNTDLEFKFPEPGYLEGVKTKQKAIVKVTNMEFQYPGTSKPQITDINFQCSLSSRIAVIGPNGAGKSTLINVLTGELLPTSGEVYTHENCRIAYIKQHAFAHIESHLDKTPSEYIQWRFQTGEDRETMDRANRQINENDAEAMNKIFKIEGTPRRIAGIHSRRKFKNTYEYECSFLLGENIGMKSERWVPMMSVDNAWIPRGELVESHSKMVAEVDMKEALASGQFRPLTRKEIEEHCSMLGLDPEIVSHSRIRGLSGGQKVKLVLAAGTWQRPHLIVLDEPTNYLDRDSLGALSKALKEFEGGVIIITHSAEFTKNLTEEVWAVKDGRMTPSGHNWVSGQGAGPRIEKKEDEEDKFDAMGNKIAGGKKKKKLSSAELRKKKKERMKKKKELGDAYVSSDEEF.

N-acetylserine is present on Ser-2. An HEAT 1 repeat occupies 5–42 (QQSIKVLEELFQKLSVATADNRHEIASEVASFLNGNII). The ADP site is built by Ile-42, His-44, and Ser-83. HEAT repeat units lie at residues 86–123 (PYIV…AVNP), 125–162 (AIKA…AAKD), 166–203 (LRMP…TVDN), 205–241 (DIER…EVTP), 242–279 (ATLS…LVED), and 285–323 (PFLG…VGNV). N6,N6,N6-trimethyllysine occurs at positions 187 and 196. Lys-350 participates in a covalent cross-link: Glycyl lysine isopeptide (Lys-Gly) (interchain with G-Cter in ubiquitin). Residues Thr-392, His-396, and Glu-397 each coordinate ADP. An ABC transporter 1 domain is found at 426–641 (DEGEDLCNCE…CPAAKAYEEL (216 aa)). Residue Lys-636 forms a Glycyl lysine isopeptide (Lys-Gly) (interchain with G-Cter in ubiquitin) linkage. Ser-642 is subject to Phosphoserine. Positions 667–993 (VKVTNMEFQY…AGPRIEKKED (327 aa)) constitute an ABC transporter 2 domain. Asn-703 contributes to the ADP binding site. Lys-789 is subject to N6,N6,N6-trimethyllysine. Glu-922, Asn-925, and His-951 together coordinate ADP. At Thr-972 the chain carries Phosphothreonine. Ser-974 carries the phosphoserine modification. The disordered stretch occupies residues 974–1044 (SGHNWVSGQG…DAYVSSDEEF (71 aa)). The span at 1007 to 1031 (GGKKKKKLSSAELRKKKKERMKKKK) shows a compositional bias: basic residues. Ser-1039 and Ser-1040 each carry phosphoserine.

Belongs to the ABC transporter superfamily. ABCF family. EF3 subfamily. Monomer. Interacts with elongation factor 1A (eEF1A). Interacts through its N-terminus with 18S rRNA. Associates with ribosomes; preferentially binds ribosomes in the post-translocational state (bearing a peptidyl-tRNA in the P-site) in the presence of ATP, suggesting that ATP hydrolysis is required for ribosome dissociation.

It is found in the cytoplasm. Its subcellular location is the cytosol. It carries out the reaction ATP + H2O = ADP + phosphate + H(+). It participates in protein biosynthesis; polypeptide chain elongation. With respect to regulation, inhibited by the translational inhibitors neomycin and alpha-sarcin, which suppress the ATPase activity. Ribosome-dependent ATPase that functions in cytoplasmic translation elongation. Required for the ATP-dependent release of deacylated tRNA from the ribosomal E-site during protein biosynthesis. Stimulates the eEF1A-dependent binding of aminoacyl-tRNA to the ribosomal A-site, which has reduced affinity for tRNA as long as the E-site is occupied. Assists translation termination by stimulating the release of nascent protein from the ribosome by release factors. In nutrient-replete conditions, occupies the space on the ribosome bound by GCN1 during amino acid starvation conditions, and therefore indirectly negatively regulates GCN2 kinase activity in replete conditions. The sequence is that of Elongation factor 3A (YEF3) from Saccharomyces cerevisiae (strain ATCC 204508 / S288c) (Baker's yeast).